The chain runs to 452 residues: Envelope glycoprotein D (452 aa).

Residues 1–19 (MPAVLLVLYVNPPPSVCIL) form the signal peptide. Over 20-405 (TQKLSLGLYN…NSTFVGISVG (386 aa)) the chain is Virion surface. N-linked (GlcNAc...) asparagine; by host glycans are attached at residues Asn-103 and Asn-111. 3 disulfide bridges follow: Cys-138-Cys-259, Cys-176-Cys-273, and Cys-188-Cys-197. Positions 331 to 365 (PDNHPGFDSVESEITQNKTDPKPGQADPKPNQPFK) are disordered. Asn-347 and Asn-396 each carry an N-linked (GlcNAc...) asparagine; by host glycan. Residues 406 to 422 (LGIAGLVLVGVILYVCL) form a helical membrane-spanning segment. At 423–452 (RRKKELKKSAQNGLTRLRSTFKDVKYTQLP) the chain is on the intravirion side.

It belongs to the herpesviridae glycoprotein D family.

The protein resides in the virion membrane. Functionally, envelope glycoprotein that binds to host cell entry receptors, promoting the virus entry into host cells. May trigger fusion with host membrane, by recruiting the fusion machinery composed of gB and gH/gL. In Equine herpesvirus 1 (strain Ab4p) (EHV-1), this protein is Envelope glycoprotein D (gD).